A 363-amino-acid polypeptide reads, in one-letter code: DNA replication and repair protein RecF (363 aa).

30 to 37 (GNNAQGKT) lines the ATP pocket.

This sequence belongs to the RecF family.

The protein resides in the cytoplasm. Its function is as follows. The RecF protein is involved in DNA metabolism; it is required for DNA replication and normal SOS inducibility. RecF binds preferentially to single-stranded, linear DNA. It also seems to bind ATP. This chain is DNA replication and repair protein RecF, found in Clostridium acetobutylicum (strain ATCC 824 / DSM 792 / JCM 1419 / IAM 19013 / LMG 5710 / NBRC 13948 / NRRL B-527 / VKM B-1787 / 2291 / W).